We begin with the raw amino-acid sequence, 594 residues long: Aspartate--tRNA(Asp/Asn) ligase (594 aa).

L-aspartate is bound at residue E173. Residues 197-200 (QLFK) form an aspartate region. L-aspartate is bound at residue R219. ATP-binding positions include 219-221 (RDE) and Q228. H449 provides a ligand contact to L-aspartate. E482 contributes to the ATP binding site. Position 489 (R489) interacts with L-aspartate. 534–537 (GLDR) contacts ATP.

This sequence belongs to the class-II aminoacyl-tRNA synthetase family. Type 1 subfamily. In terms of assembly, homodimer.

It localises to the cytoplasm. It catalyses the reaction tRNA(Asx) + L-aspartate + ATP = L-aspartyl-tRNA(Asx) + AMP + diphosphate. Aspartyl-tRNA synthetase with relaxed tRNA specificity since it is able to aspartylate not only its cognate tRNA(Asp) but also tRNA(Asn). Reaction proceeds in two steps: L-aspartate is first activated by ATP to form Asp-AMP and then transferred to the acceptor end of tRNA(Asp/Asn). This Saccharophagus degradans (strain 2-40 / ATCC 43961 / DSM 17024) protein is Aspartate--tRNA(Asp/Asn) ligase.